A 360-amino-acid polypeptide reads, in one-letter code: UDP-N-acetylglucosamine--N-acetylmuramyl-(pentapeptide) pyrophosphoryl-undecaprenol N-acetylglucosamine transferase (360 aa).

Positions 198 and 289 each coordinate UDP-N-acetyl-alpha-D-glucosamine.

This sequence belongs to the glycosyltransferase 28 family. MurG subfamily.

It is found in the cell membrane. It carries out the reaction Mur2Ac(oyl-L-Ala-gamma-D-Glu-L-Lys-D-Ala-D-Ala)-di-trans,octa-cis-undecaprenyl diphosphate + UDP-N-acetyl-alpha-D-glucosamine = beta-D-GlcNAc-(1-&gt;4)-Mur2Ac(oyl-L-Ala-gamma-D-Glu-L-Lys-D-Ala-D-Ala)-di-trans,octa-cis-undecaprenyl diphosphate + UDP + H(+). Its pathway is cell wall biogenesis; peptidoglycan biosynthesis. Cell wall formation. Catalyzes the transfer of a GlcNAc subunit on undecaprenyl-pyrophosphoryl-MurNAc-pentapeptide (lipid intermediate I) to form undecaprenyl-pyrophosphoryl-MurNAc-(pentapeptide)GlcNAc (lipid intermediate II). The protein is UDP-N-acetylglucosamine--N-acetylmuramyl-(pentapeptide) pyrophosphoryl-undecaprenol N-acetylglucosamine transferase of Streptococcus pyogenes serotype M5 (strain Manfredo).